The sequence spans 250 residues: Ubiquinone/menaquinone biosynthesis C-methyltransferase UbiE (250 aa).

Residues Thr73, Asp94, and 122 to 123 (DA) contribute to the S-adenosyl-L-methionine site.

It belongs to the class I-like SAM-binding methyltransferase superfamily. MenG/UbiE family.

The enzyme catalyses a 2-demethylmenaquinol + S-adenosyl-L-methionine = a menaquinol + S-adenosyl-L-homocysteine + H(+). It catalyses the reaction a 2-methoxy-6-(all-trans-polyprenyl)benzene-1,4-diol + S-adenosyl-L-methionine = a 5-methoxy-2-methyl-3-(all-trans-polyprenyl)benzene-1,4-diol + S-adenosyl-L-homocysteine + H(+). It functions in the pathway quinol/quinone metabolism; menaquinone biosynthesis; menaquinol from 1,4-dihydroxy-2-naphthoate: step 2/2. Its pathway is cofactor biosynthesis; ubiquinone biosynthesis. Its function is as follows. Methyltransferase required for the conversion of demethylmenaquinol (DMKH2) to menaquinol (MKH2) and the conversion of 2-polyprenyl-6-methoxy-1,4-benzoquinol (DDMQH2) to 2-polyprenyl-3-methyl-6-methoxy-1,4-benzoquinol (DMQH2). The chain is Ubiquinone/menaquinone biosynthesis C-methyltransferase UbiE from Coxiella burnetii (strain RSA 493 / Nine Mile phase I).